A 554-amino-acid polypeptide reads, in one-letter code: Glutamine--tRNA ligase (554 aa).

Residues 34–44 (PEPNGYLHIGH) carry the 'HIGH' region motif. ATP-binding positions include 35–37 (EPN) and 41–47 (HIGHAKS). 2 residues coordinate L-glutamine: aspartate 67 and tyrosine 212. Residues threonine 231, 261–262 (RL), and 269–271 (MSK) each bind ATP. The 'KMSKS' region motif lies at 268 to 272 (VMSKR). The interaction with tRNA stretch occupies residues 317-324 (TKQDNTIE).

Belongs to the class-I aminoacyl-tRNA synthetase family. In terms of assembly, monomer.

It localises to the cytoplasm. The catalysed reaction is tRNA(Gln) + L-glutamine + ATP = L-glutaminyl-tRNA(Gln) + AMP + diphosphate. This Shigella flexneri serotype 5b (strain 8401) protein is Glutamine--tRNA ligase.